Consider the following 605-residue polypeptide: Protein Spindly (605 aa).

Met-1 bears the N-acetylmethionine mark. The stretch at 3-442 (TDIVINLRCK…ELKLKYEPEE (440 aa)) forms a coiled coil. Ser-513, Ser-515, and Ser-555 each carry phosphoserine. The segment at 545 to 581 (LSERSGNTLNSPRLAAESKLQTEVKEGKETASKLEKE) is disordered. A compositionally biased stretch (basic and acidic residues) spans 564 to 581 (LQTEVKEGKETASKLEKE).

It belongs to the Spindly family. In terms of assembly, interacts with KNTC1 and ZW10. These interactions appear weak and may be transient or indirect. Interacts with dynein intermediate chain and dynactin (DCTN1). Interacts with the catalytically active form of USP45. Monoubiquitinated with'Lys-48' linkage. Deubiquitinated by USP45.

It is found in the cytoplasm. Its subcellular location is the cytoskeleton. It localises to the microtubule organizing center. The protein resides in the centrosome. The protein localises to the chromosome. It is found in the centromere. Its subcellular location is the kinetochore. It localises to the nucleus. The protein resides in the spindle pole. In terms of biological role, required for the localization of dynein and dynactin to the mitotic kintochore. Dynein is believed to control the initial lateral interaction between the kinetochore and spindle microtubules and to facilitate the subsequent formation of end-on kinetochore-microtubule attachments mediated by the NDC80 complex. Also required for correct spindle orientation. Does not appear to be required for the removal of spindle assembly checkpoint (SAC) proteins from the kinetochore upon bipolar spindle attachment. Acts as an adapter protein linking the dynein motor complex to various cargos and converts dynein from a non-processive to a highly processive motor in the presence of dynactin. Facilitates the interaction between dynein and dynactin and activates dynein processivity (the ability to move along a microtubule for a long distance without falling off the track). Plays a role in cell migration. The sequence is that of Protein Spindly from Macaca fascicularis (Crab-eating macaque).